Here is a 565-residue protein sequence, read N- to C-terminus: Adenine deaminase (565 aa).

It belongs to the metallo-dependent hydrolases superfamily. Adenine deaminase family. The cofactor is Mn(2+).

It carries out the reaction adenine + H2O + H(+) = hypoxanthine + NH4(+). This Sinorhizobium fredii (strain NBRC 101917 / NGR234) protein is Adenine deaminase.